A 189-amino-acid polypeptide reads, in one-letter code: Xanthine phosphoribosyltransferase (189 aa).

The xanthine site is built by Leu-20 and Asn-27. 128–132 (ANGQA) serves as a coordination point for 5-phospho-alpha-D-ribose 1-diphosphate. Lys-156 contributes to the xanthine binding site.

This sequence belongs to the purine/pyrimidine phosphoribosyltransferase family. Xpt subfamily. As to quaternary structure, homodimer.

The protein resides in the cytoplasm. The enzyme catalyses XMP + diphosphate = xanthine + 5-phospho-alpha-D-ribose 1-diphosphate. Its pathway is purine metabolism; XMP biosynthesis via salvage pathway; XMP from xanthine: step 1/1. Functionally, converts the preformed base xanthine, a product of nucleic acid breakdown, to xanthosine 5'-monophosphate (XMP), so it can be reused for RNA or DNA synthesis. The polypeptide is Xanthine phosphoribosyltransferase (Leuconostoc mesenteroides subsp. mesenteroides (strain ATCC 8293 / DSM 20343 / BCRC 11652 / CCM 1803 / JCM 6124 / NCDO 523 / NBRC 100496 / NCIMB 8023 / NCTC 12954 / NRRL B-1118 / 37Y)).